We begin with the raw amino-acid sequence, 178 residues long: ATP-dependent protease subunit HslV (178 aa).

Thr7 is a catalytic residue. Residues Gly162, Cys165, and Thr168 each coordinate Na(+).

The protein belongs to the peptidase T1B family. HslV subfamily. A double ring-shaped homohexamer of HslV is capped on each side by a ring-shaped HslU homohexamer. The assembly of the HslU/HslV complex is dependent on binding of ATP.

Its subcellular location is the cytoplasm. It carries out the reaction ATP-dependent cleavage of peptide bonds with broad specificity.. Its activity is regulated as follows. Allosterically activated by HslU binding. Functionally, protease subunit of a proteasome-like degradation complex believed to be a general protein degrading machinery. The sequence is that of ATP-dependent protease subunit HslV from Burkholderia ambifaria (strain ATCC BAA-244 / DSM 16087 / CCUG 44356 / LMG 19182 / AMMD) (Burkholderia cepacia (strain AMMD)).